A 572-amino-acid chain; its full sequence is M-phase inducer phosphatase 3 (572 aa).

Disordered stretches follow at residues 95 to 117 (NLGD…GKLE) and 304 to 354 (SPSM…QRRG). The 108-residue stretch at 420 to 527 (LVEKFFIIDC…FFPEYKELCE (108 aa)) folds into the Rhodanese domain. C476 is an active-site residue.

Belongs to the MPI phosphatase family.

The enzyme catalyses O-phospho-L-tyrosyl-[protein] + H2O = L-tyrosyl-[protein] + phosphate. Its function is as follows. This protein functions as a dosage-dependent inducer in mitotic control. It is a tyrosine protein phosphatase required for progression of the cell cycle. It may directly dephosphorylate p34(cdc2) and activate the p34(cdc2) kinase activity. This Xenopus laevis (African clawed frog) protein is M-phase inducer phosphatase 3 (cdc25-3).